The following is a 369-amino-acid chain: uncharacterized protein (369 aa).

Residues 1–35 (MQTNNPSYFFRSESALQDEKRKEEKSHNPNGNPRN) are disordered. The span at 17–27 (QDEKRKEEKSH) shows a compositional bias: basic and acidic residues. WD repeat units lie at residues 83-127 (GHSG…CVET), 130-169 (GHTD…SRLL), 174-213 (GHSR…GSQL), 220-260 (GHQS…HEET), 263-301 (EHPD…VKDI), and 304-341 (GHYE…DNNE).

This is an uncharacterized protein from Schizosaccharomyces pombe (strain 972 / ATCC 24843) (Fission yeast).